Here is a 349-residue protein sequence, read N- to C-terminus: Nicotinate-nucleotide--dimethylbenzimidazole phosphoribosyltransferase (349 aa).

Glu-316 (proton acceptor) is an active-site residue.

Belongs to the CobT family.

It catalyses the reaction 5,6-dimethylbenzimidazole + nicotinate beta-D-ribonucleotide = alpha-ribazole 5'-phosphate + nicotinate + H(+). The protein operates within nucleoside biosynthesis; alpha-ribazole biosynthesis; alpha-ribazole from 5,6-dimethylbenzimidazole: step 1/2. In terms of biological role, catalyzes the synthesis of alpha-ribazole-5'-phosphate from nicotinate mononucleotide (NAMN) and 5,6-dimethylbenzimidazole (DMB). The protein is Nicotinate-nucleotide--dimethylbenzimidazole phosphoribosyltransferase of Photorhabdus laumondii subsp. laumondii (strain DSM 15139 / CIP 105565 / TT01) (Photorhabdus luminescens subsp. laumondii).